Reading from the N-terminus, the 345-residue chain is Phosphoribosylformylglycinamidine cyclo-ligase (345 aa).

The protein belongs to the AIR synthase family.

It localises to the cytoplasm. It carries out the reaction 2-formamido-N(1)-(5-O-phospho-beta-D-ribosyl)acetamidine + ATP = 5-amino-1-(5-phospho-beta-D-ribosyl)imidazole + ADP + phosphate + H(+). The protein operates within purine metabolism; IMP biosynthesis via de novo pathway; 5-amino-1-(5-phospho-D-ribosyl)imidazole from N(2)-formyl-N(1)-(5-phospho-D-ribosyl)glycinamide: step 2/2. The chain is Phosphoribosylformylglycinamidine cyclo-ligase from Shewanella amazonensis (strain ATCC BAA-1098 / SB2B).